A 433-amino-acid polypeptide reads, in one-letter code: Histidinol dehydrogenase (433 aa).

3 residues coordinate NAD(+): Tyr133, Gln194, and Asn217. 3 residues coordinate substrate: Ser240, Gln262, and His265. 2 residues coordinate Zn(2+): Gln262 and His265. Residues Glu330 and His331 each act as proton acceptor in the active site. Positions 331, 364, 418, and 423 each coordinate substrate. Asp364 serves as a coordination point for Zn(2+). Position 423 (His423) interacts with Zn(2+).

This sequence belongs to the histidinol dehydrogenase family. Zn(2+) serves as cofactor.

The catalysed reaction is L-histidinol + 2 NAD(+) + H2O = L-histidine + 2 NADH + 3 H(+). It functions in the pathway amino-acid biosynthesis; L-histidine biosynthesis; L-histidine from 5-phospho-alpha-D-ribose 1-diphosphate: step 9/9. Catalyzes the sequential NAD-dependent oxidations of L-histidinol to L-histidinaldehyde and then to L-histidine. In Hydrogenovibrio crunogenus (strain DSM 25203 / XCL-2) (Thiomicrospira crunogena), this protein is Histidinol dehydrogenase.